A 615-amino-acid chain; its full sequence is Elongation factor 4 (615 aa).

Residues 14–200 (ARIRNFCIIA…KVVELIPAPT (187 aa)) form the tr-type G domain. Residues 26–31 (DHGKST) and 147–150 (NKID) contribute to the GTP site.

It belongs to the TRAFAC class translation factor GTPase superfamily. Classic translation factor GTPase family. LepA subfamily.

It localises to the cell membrane. The catalysed reaction is GTP + H2O = GDP + phosphate + H(+). In terms of biological role, required for accurate and efficient protein synthesis under certain stress conditions. May act as a fidelity factor of the translation reaction, by catalyzing a one-codon backward translocation of tRNAs on improperly translocated ribosomes. Back-translocation proceeds from a post-translocation (POST) complex to a pre-translocation (PRE) complex, thus giving elongation factor G a second chance to translocate the tRNAs correctly. Binds to ribosomes in a GTP-dependent manner. The chain is Elongation factor 4 from Corynebacterium glutamicum (strain ATCC 13032 / DSM 20300 / JCM 1318 / BCRC 11384 / CCUG 27702 / LMG 3730 / NBRC 12168 / NCIMB 10025 / NRRL B-2784 / 534).